The chain runs to 1033 residues: Calcium-transporting ATPase 12, plasma membrane-type (1033 aa).

Methionine 1 bears the N-acetylmethionine mark. The Cytoplasmic portion of the chain corresponds to 1 to 152; sequence MRDLKEYDYS…NTYHKPPPKG (152 aa). Residues 25–36 form an interaction with calmodulin region; the sequence is QRRWRFAYAAIY. A Phosphoserine modification is found at serine 37. Residues 153 to 173 form a helical membrane-spanning segment; it reads LLFFVYEAFKDLTILILLVCA. Residues 174–191 lie on the Lumenal side of the membrane; sequence IFSLGFGIKEHGIKEGWY. Residues 192 to 212 traverse the membrane as a helical segment; that stretch reads EGGSIFVAVFLVIVVSALSNF. Residues 213 to 341 are Cytoplasmic-facing; the sequence is RQERQFDKLS…SERTPLQVRL (129 aa). Residues 342–361 traverse the membrane as a helical segment; sequence DTLTSTIGKIGLTVAALVLV. The Lumenal portion of the chain corresponds to 362–397; it reads VLLVRYFTGNTEKEGKREYNGSKTPVDTVVNSVVRI. The chain crosses the membrane as a helical span at residues 398 to 415; the sequence is VAAAVTIVVVAIPEGLPL. Residues 416–806 are Cytoplasmic-facing; the sequence is AVTLTLAYSM…KWGRCVYNNI (391 aa). The active-site 4-aspartylphosphate intermediate is the aspartate 453. Mg(2+) contacts are provided by aspartate 751 and aspartate 755. A helical transmembrane segment spans residues 807-825; sequence QKFIQFQLTVNVAALVINF. At 826–836 the chain is on the lumenal side; the sequence is IAAISAGEVPL. A helical membrane pass occupies residues 837–857; it reads TAVQLLWVNLIMDTLGALALA. Over 858-877 the chain is Cytoplasmic; it reads TERPTNELLKRKPVGRTEAL. Residues 878 to 900 traverse the membrane as a helical segment; the sequence is ITNVMWRNLLVQSLYQIAVLLIL. Topologically, residues 901-909 are lumenal; it reads QFKGMSIFS. The helical transmembrane segment at 910-930 threads the bilayer; the sequence is VRKEVKDTLIFNTFVLCQVFN. At 931–948 the chain is on the cytoplasmic side; it reads EFNAREMEKKNVFKGLHR. Residues 949–970 form a helical membrane-spanning segment; sequence NRLFIGIIAITIVLQVIMVEFL. At 971–980 the chain is on the lumenal side; sequence KKFADTVRLN. Residues 981–1002 traverse the membrane as a helical segment; sequence GWQWGTCIALASLSWPIGFFTK. Over 1003–1006 the chain is Cytoplasmic; it reads FIPV.

This sequence belongs to the cation transport ATPase (P-type) (TC 3.A.3) family. Type IIB subfamily.

Its subcellular location is the membrane. The catalysed reaction is Ca(2+)(in) + ATP + H2O = Ca(2+)(out) + ADP + phosphate + H(+). Activated by calmodulin. Functionally, this magnesium-dependent enzyme catalyzes the hydrolysis of ATP coupled with the translocation of calcium from the cytosol out of the cell or into organelles. The protein is Calcium-transporting ATPase 12, plasma membrane-type (ACA12) of Arabidopsis thaliana (Mouse-ear cress).